Here is a 339-residue protein sequence, read N- to C-terminus: Homeobox protein Hox-D13 (339 aa).

Residues 1–33 are disordered; sequence MSRSGTWDMDGLRADGGAAGAAPASSSSSVAAP. Positions 20–33 are enriched in low complexity; it reads GAAPASSSSSVAAP. A DNA-binding region (homeobox) is located at residues 272–331; sequence GRKKRVPYTKLQLKELENEYAINKFINKDKRRRISAATNLSERQVTIWFQNRRVKDKKIV.

This sequence belongs to the Abd-B homeobox family.

The protein resides in the nucleus. In terms of biological role, sequence-specific transcription factor that binds gene promoters and activates their transcription. Part of a developmental regulatory system that provides cells with specific positional identities on the anterior-posterior axis. This is Homeobox protein Hox-D13 (Hoxd13) from Mus musculus (Mouse).